Reading from the N-terminus, the 185-residue chain is Sarcoplasmic calcium-binding proteins II, V, VI, and VII (185 aa).

EF-hand domains lie at 5-41 (FQKQKIKFTFDFFLDMNHDGSIQDNDFEDMMTRYKEV), 57-92 (SLEDEWRDLKGRADINKDDVVSWEEYLAMWEKTIAT), 102-137 (WCQNRIPFLFKGMDVSGDGIVDLEEFQNYCKNFQLQ), and 138-173 (CADVPAVYNVITDGGKVTFDLNRYKELYYRLLTSPA). Residues Asp-19, Asn-21, Asp-23, Ser-25, Asp-30, Asp-70, Asn-72, Asp-74, Glu-81, Asp-115, Ser-117, Asp-119, and Glu-126 each contribute to the Ca(2+) site.

Its function is as follows. Like parvalbumins, SCPs seem to be more abundant in fast contracting muscles, but no functional relationship can be established from this distribution. This chain is Sarcoplasmic calcium-binding proteins II, V, VI, and VII, found in Branchiostoma lanceolatum (Common lancelet).